The sequence spans 371 residues: MPKFTARQNFPDYKSNGHKCMVGRHLTEDMYERLYELRTPNGVSIDKCIQPSVDNTGRIIGLVAGDPESYEVFKELFDAVINEKHGGFGPTDKHPPPDLNANALVGGQFDPKYVKSARIRTGRSVKGFCLPPSISRAERREVERIIVDALAGLEGDLAGVYYPLKKMTPEQEKQLIADHFLFQKPTGHLMVNSGAVRDWPDARGIWHNKDKTFLIWINEEDQVRIIAMQHGGDVKAVFERFSRGLTQIEGLMKKHGHEFAWSERLGYICTCPSNLGTGLRASVHLQLHKLSKHPKFEEIILAFHLQKRGTGGEHTEAVDDVYDISNRARLKKSEREFVQLLIDGVGKLIEYEKLLEAGKSIDDVLPASLKG.

The Phosphagen kinase N-terminal domain occupies Met1–Gly86. In terms of domain architecture, Phosphagen kinase C-terminal spans Tyr113–Leu355. Residues Ser116–Arg120, His179, Arg224, Arg280, Arg308–Glu313, and Asp323 contribute to the ATP site.

It belongs to the ATP:guanido phosphotransferase family. As to quaternary structure, homodimer.

The enzyme catalyses L-lombricine + ATP = N-phospho-L-lombricine + ADP + H(+). This chain is Lombricine kinase, found in Eisenia fetida (Red wiggler worm).